Here is a 116-residue protein sequence, read N- to C-terminus: U16-barytoxin-Tl1b (116 aa).

Residues 1–20 (MKTIIVFLSLLVLATKFGDA) form the signal peptide. The propeptide occupies 21–74 (KEGVNQKQKKEVTQNEFREEYLNEMAAMSLVQQLEAIERALFENEAGRNSRQKR). 3 disulfides stabilise this stretch: C75/C90, C82/C95, and C89/C110.

The protein belongs to the neurotoxin 14 (magi-1) family. 06 (ICK-Trit) subfamily. In terms of tissue distribution, expressed by the venom gland.

The protein localises to the secreted. Ion channel inhibitor. In Trittame loki (Brush-footed trapdoor spider), this protein is U16-barytoxin-Tl1b.